The primary structure comprises 137 residues: Acidic phospholipase A2 beta-bungarotoxin A chain (137 aa).

Residues 1–9 (AVCVSLLGA) form the signal peptide. A propeptide spanning residues 10 to 17 (ANIPPHPL) is cleaved from the precursor. Intrachain disulfides connect cysteine 44–cysteine 136, cysteine 46–cysteine 62, cysteine 61–cysteine 117, cysteine 68–cysteine 110, cysteine 78–cysteine 103, and cysteine 96–cysteine 108. 3 residues coordinate Ca(2+): tyrosine 45, glycine 47, and glycine 49. The active site involves histidine 65. Aspartate 66 serves as a coordination point for Ca(2+). The active site involves aspartate 111.

It belongs to the phospholipase A2 family. Group I subfamily. D49 sub-subfamily. Heterodimer; disulfide-linked. The A chain has phospholipase A2 activity and the B chain shows homology with the basic protease inhibitors. The cofactor is Ca(2+). Expressed by the venom gland.

The protein resides in the secreted. The enzyme catalyses a 1,2-diacyl-sn-glycero-3-phosphocholine + H2O = a 1-acyl-sn-glycero-3-phosphocholine + a fatty acid + H(+). Beta bungarotoxin is a presynaptic neurotoxin. The A chain has phospholipase activity. PLA2 catalyzes the calcium-dependent hydrolysis of the 2-acyl groups in 3-sn-phosphoglycerides. The sequence is that of Acidic phospholipase A2 beta-bungarotoxin A chain from Bungarus candidus (Malayan krait).